The sequence spans 604 residues: MIRTHDAGSLRATDAGTTVTLAGWVARRRDHGGVIFVDLRDGSGVAQVVLREEDAHVLRNEYCVRITGEVTRRPEGNENPELATGEVEVTADELEVLSEAAPLPLPVDDQIEAGDDIRLRYRYLDLRRSGPANALRLRSRANQIARTVLHERDFLEIETPTLTRSTPEGARDFLVPVRLQPGTWYALPQSPQLFKQLLMVGGMERYYQIARCYRDEDFRADRQPEFTQLDIEMSFVTEDDVIDLGEAIVSRLWRQLAGHQITRPIPRITWHDAMARYGSDKPDLRYGVELTELTDYLRGTRFRVFAGAIEAGGYVGAVVMPGGAAQSRKELDGWQDWAKARGAKGLAYVVLDAETGEARGPVAKNLSAEHLAGLADAVGAKPGDAIFFAAGAESRAAQELLGAARVEIARRANLVDESAWAFCWVVDAPMFERVSDSEEGGWTAVHHPFTAPNAEWVDRFEEAPDRALAYAYDIVCNGNEIGGGSIRIHRGDVQQRVFDLLGITPEQARDKFGFLLEAFKYGPPPHGGIALGWDRICMLLAGADSIREVIAFPKTRGGFDPLTSAPTPITAAQRLEAGVDARPKPEARAQAGTAGPAAPVADPT.

Residue E168 coordinates L-aspartate. Residues 192-195 form an aspartate region; the sequence is QLFK. Position 214 (R214) interacts with L-aspartate. ATP-binding positions include 214 to 216 and Q223; that span reads RDE. Residue H446 coordinates L-aspartate. Residue E480 coordinates ATP. R487 is a binding site for L-aspartate. 532 to 535 contacts ATP; sequence GWDR. The interval 575-604 is disordered; that stretch reads LEAGVDARPKPEARAQAGTAGPAAPVADPT. A compositionally biased stretch (basic and acidic residues) spans 577–587; sequence AGVDARPKPEA. Over residues 588–604 the composition is skewed to low complexity; the sequence is RAQAGTAGPAAPVADPT.

It belongs to the class-II aminoacyl-tRNA synthetase family. Type 1 subfamily. In terms of assembly, homodimer.

The protein localises to the cytoplasm. It carries out the reaction tRNA(Asx) + L-aspartate + ATP = L-aspartyl-tRNA(Asx) + AMP + diphosphate. Aspartyl-tRNA synthetase with relaxed tRNA specificity since it is able to aspartylate not only its cognate tRNA(Asp) but also tRNA(Asn). Reaction proceeds in two steps: L-aspartate is first activated by ATP to form Asp-AMP and then transferred to the acceptor end of tRNA(Asp/Asn). The sequence is that of Aspartate--tRNA(Asp/Asn) ligase from Salinispora arenicola (strain CNS-205).